Consider the following 315-residue polypeptide: tRNA uridine(34) hydroxylase (315 aa).

In terms of domain architecture, Rhodanese spans 122-223 (SDPDVLVIDT…YLEQIPQPES (102 aa)). Cys-183 serves as the catalytic Cysteine persulfide intermediate.

This sequence belongs to the TrhO family.

It catalyses the reaction uridine(34) in tRNA + AH2 + O2 = 5-hydroxyuridine(34) in tRNA + A + H2O. In terms of biological role, catalyzes oxygen-dependent 5-hydroxyuridine (ho5U) modification at position 34 in tRNAs. The protein is tRNA uridine(34) hydroxylase of Caulobacter vibrioides (strain ATCC 19089 / CIP 103742 / CB 15) (Caulobacter crescentus).